The following is a 122-amino-acid chain: UPF0102 protein R00337 (122 aa).

Belongs to the UPF0102 family.

The polypeptide is UPF0102 protein R00337 (Rhizobium meliloti (strain 1021) (Ensifer meliloti)).